A 467-amino-acid polypeptide reads, in one-letter code: Glycosyl hydrolase family 109 protein (467 aa).

A signal peptide (tat-type signal) is located at residues 1–31 (MKNFNRRAFLKAAGATTAGLVTSGLILPASA). NAD(+)-binding positions include 66 to 67 (QR), Asp-88, 137 to 140 (WQWH), 157 to 158 (EV), and Asn-186. Residues Tyr-215, Arg-234, 246–249 (YPTH), and Tyr-328 contribute to the substrate site. NAD(+) is bound at residue Tyr-246.

This sequence belongs to the Gfo/Idh/MocA family. Glycosyl hydrolase 109 subfamily. NAD(+) is required as a cofactor. Post-translationally, predicted to be exported by the Tat system. The position of the signal peptide cleavage has not been experimentally proven.

Functionally, glycosidase. This is Glycosyl hydrolase family 109 protein from Shewanella woodyi (strain ATCC 51908 / MS32).